The primary structure comprises 682 residues: Potassium-transporting ATPase ATP-binding subunit (682 aa).

A run of 4 helical transmembrane segments spans residues 34-54 (PVMFVVWAGSVLTTLLTLAMV), 58-78 (IAGSALFTGIISLWLWFTVLF), 219-239 (IALTILLIALTIVFLLATATL), and 254-274 (VLVALLVCLIPTTIGGLLSAI). Asp-307 serves as the catalytic 4-aspartylphosphate intermediate. Residues Asp-344, Glu-348, 377–384 (FTAQSRMS), and Lys-395 each bind ATP. Residues Asp-518 and Asp-522 each coordinate Mg(2+). 3 consecutive transmembrane segments (helical) span residues 588–608 (FAIIPAAFAATYPQLNALNVM), 616–636 (AILSAVIFNALIIIFLIPLAL), and 662–682 (LVVPFIGIKVIDVLLTLLGLA).

The protein belongs to the cation transport ATPase (P-type) (TC 3.A.3) family. Type IA subfamily. The system is composed of three essential subunits: KdpA, KdpB and KdpC.

The protein resides in the cell inner membrane. The catalysed reaction is K(+)(out) + ATP + H2O = K(+)(in) + ADP + phosphate + H(+). Its function is as follows. Part of the high-affinity ATP-driven potassium transport (or Kdp) system, which catalyzes the hydrolysis of ATP coupled with the electrogenic transport of potassium into the cytoplasm. This subunit is responsible for energy coupling to the transport system and for the release of the potassium ions to the cytoplasm. The polypeptide is Potassium-transporting ATPase ATP-binding subunit (Salmonella agona (strain SL483)).